We begin with the raw amino-acid sequence, 276 residues long: UPF0328 protein ECU04_0100 (276 aa).

Positions 1–24 are disordered; sequence MGIIDVQRSHLTATPSKERDAPAH.

Belongs to the UPF0328 family.

The sequence is that of UPF0328 protein ECU04_0100 from Encephalitozoon cuniculi (strain GB-M1) (Microsporidian parasite).